We begin with the raw amino-acid sequence, 363 residues long: MPLTKYKAACVTSEPCWFDLEAGVQKTINFINEAGAAGCKLIAFPEVWIPGYPYWMWKINYQQSLPMLKSYRENSLPMDSEEFRRIRRAARDNQIYVSLGFSEIDHATLYLAQALIGPTGEVINHRRKIKPTHVEKLVYGDGAGDTFKSVTQTELGRLGQLNCWENMNPFLKALNVSEGEQIHIAAWPVYPGKETLKYPDPATNVADPASDLVTPAYAIETGTWTLAPFQRLSVEGLKKTTPEGVEPETDPSTYNGHARIYKPDGTLVCKPDKDFDGLLFVDIDLNECHLAKALADFSGHYMRPDLIRLLVDTRRKELITEADTNGGIATYTTRERLGLNIPLDAQAPKQKATAADVPSSSVM.

The CN hydrolase domain occupies Tyr-6–Leu-285. The active-site Proton acceptor is the Glu-46. Lys-128 is a catalytic residue. Catalysis depends on Cys-163, which acts as the Nucleophile.

The protein belongs to the carbon-nitrogen hydrolase superfamily. Nitrilase family. In terms of assembly, oligomer of dimers, forming left-handed helical fibers.

It catalyses the reaction formamide = hydrogen cyanide + H2O. Its function is as follows. Catalyzes the hydration of cyanide to formamide. Degradation of cyanide may be important for plant pathogenic fungi in infection of cyanogenic plants. This Alternaria brassicicola (Dark leaf spot agent) protein is Cyanide hydratase (CyhAB).